The chain runs to 85 residues: Large ribosomal subunit protein bL27 (85 aa).

The protein belongs to the bacterial ribosomal protein bL27 family.

This Mycobacteroides abscessus (strain ATCC 19977 / DSM 44196 / CCUG 20993 / CIP 104536 / JCM 13569 / NCTC 13031 / TMC 1543 / L948) (Mycobacterium abscessus) protein is Large ribosomal subunit protein bL27.